A 303-amino-acid chain; its full sequence is Protease HtpX homolog (303 aa).

The next 2 helical transmembrane spans lie at 19–39 and 41–61; these read IIIFVISILLFLVCYAIVSYF and LGEFGILVAFLMVFFVNYYAY. Zn(2+) is bound at residue His146. Glu147 is an active-site residue. His150 is a binding site for Zn(2+). 2 consecutive transmembrane segments (helical) span residues 156–176 and 192–212; these read VRLQTVAAVMVGLIVILGDSL and NILGIVSLVIAILAPFLATLL. Glu221 serves as a coordination point for Zn(2+).

The protein belongs to the peptidase M48B family. Zn(2+) serves as cofactor.

It localises to the cell inner membrane. In Dictyoglomus thermophilum (strain ATCC 35947 / DSM 3960 / H-6-12), this protein is Protease HtpX homolog.